The following is a 568-amino-acid chain: Urease subunit alpha (568 aa).

One can recognise a Urease domain in the interval 130–568; sequence GGIDTHIHFI…LPMAQRYFLF (439 aa). His-135, His-137, and Lys-218 together coordinate Ni(2+). Lys-218 carries the post-translational modification N6-carboxylysine. His-220 lines the substrate pocket. Positions 247 and 273 each coordinate Ni(2+). His-321 functions as the Proton donor in the catalytic mechanism. A Ni(2+)-binding site is contributed by Asp-361.

Belongs to the metallo-dependent hydrolases superfamily. Urease alpha subunit family. Heterotrimer of UreA (gamma), UreB (beta) and UreC (alpha) subunits. Three heterotrimers associate to form the active enzyme. The cofactor is Ni cation. Carboxylation allows a single lysine to coordinate two nickel ions.

The protein localises to the cytoplasm. The catalysed reaction is urea + 2 H2O + H(+) = hydrogencarbonate + 2 NH4(+). The protein operates within nitrogen metabolism; urea degradation; CO(2) and NH(3) from urea (urease route): step 1/1. This chain is Urease subunit alpha, found in Burkholderia pseudomallei (strain 668).